A 273-amino-acid chain; its full sequence is Multidrug-efflux transporter 2 regulator (273 aa).

In terms of domain architecture, HTH merR-type spans 8-77 (YFTTGEFSKL…LKEIKCLIKG (70 aa)). The H-T-H motif DNA-binding region spans 11–30 (TGEFSKLCRVKKQTLFHYDE).

Its function is as follows. Activates transcription of the blt gene in response to structurally dissimilar drugs. The sequence is that of Multidrug-efflux transporter 2 regulator (bltR) from Bacillus subtilis (strain 168).